The primary structure comprises 295 residues: Serpentine receptor class gamma-53 (295 aa).

Transmembrane regions (helical) follow at residues 7-27 (IWLC…VLLS), 39-61 (VITM…RMVF), 121-141 (FYLL…QLLY), 173-193 (CFMS…LYQV), 211-230 (MSLI…AWQT), and 241-261 (IELL…ILLI).

This sequence belongs to the nematode receptor-like protein srg family.

The protein localises to the membrane. The polypeptide is Serpentine receptor class gamma-53 (srg-53) (Caenorhabditis elegans).